The chain runs to 217 residues: Protein-L-isoaspartate O-methyltransferase (217 aa).

S65 is a catalytic residue.

It belongs to the methyltransferase superfamily. L-isoaspartyl/D-aspartyl protein methyltransferase family.

It localises to the cytoplasm. The catalysed reaction is [protein]-L-isoaspartate + S-adenosyl-L-methionine = [protein]-L-isoaspartate alpha-methyl ester + S-adenosyl-L-homocysteine. Catalyzes the methyl esterification of L-isoaspartyl residues in peptides and proteins that result from spontaneous decomposition of normal L-aspartyl and L-asparaginyl residues. It plays a role in the repair and/or degradation of damaged proteins. The sequence is that of Protein-L-isoaspartate O-methyltransferase from Methanoregula boonei (strain DSM 21154 / JCM 14090 / 6A8).